Here is a 502-residue protein sequence, read N- to C-terminus: Glycerol kinase (502 aa).

ADP is bound at residue Thr-13. Thr-13, Thr-14, and Ser-15 together coordinate ATP. Thr-13 is a sn-glycerol 3-phosphate binding site. Residue Arg-17 participates in ADP binding. 4 residues coordinate sn-glycerol 3-phosphate: Arg-83, Glu-84, Tyr-136, and Asp-246. 5 residues coordinate glycerol: Arg-83, Glu-84, Tyr-136, Asp-246, and Gln-247. 2 residues coordinate ADP: Thr-268 and Gly-311. The ATP site is built by Thr-268, Gly-311, Gln-315, and Gly-412. ADP-binding residues include Gly-412 and Asn-416.

The protein belongs to the FGGY kinase family.

It catalyses the reaction glycerol + ATP = sn-glycerol 3-phosphate + ADP + H(+). It participates in polyol metabolism; glycerol degradation via glycerol kinase pathway; sn-glycerol 3-phosphate from glycerol: step 1/1. Its activity is regulated as follows. Inhibited by fructose 1,6-bisphosphate (FBP). Functionally, key enzyme in the regulation of glycerol uptake and metabolism. Catalyzes the phosphorylation of glycerol to yield sn-glycerol 3-phosphate. The chain is Glycerol kinase from Francisella tularensis subsp. mediasiatica (strain FSC147).